Here is a 209-residue protein sequence, read N- to C-terminus: ATP-dependent Clp protease proteolytic subunit (209 aa).

The Nucleophile role is filled by Ser101. His126 is an active-site residue.

It belongs to the peptidase S14 family. Component of the chloroplastic Clp protease core complex.

It localises to the plastid. It is found in the chloroplast stroma. It carries out the reaction Hydrolysis of proteins to small peptides in the presence of ATP and magnesium. alpha-casein is the usual test substrate. In the absence of ATP, only oligopeptides shorter than five residues are hydrolyzed (such as succinyl-Leu-Tyr-|-NHMec, and Leu-Tyr-Leu-|-Tyr-Trp, in which cleavage of the -Tyr-|-Leu- and -Tyr-|-Trp bonds also occurs).. In terms of biological role, cleaves peptides in various proteins in a process that requires ATP hydrolysis. Has a chymotrypsin-like activity. Plays a major role in the degradation of misfolded proteins. The protein is ATP-dependent Clp protease proteolytic subunit of Huperzia lucidula (Shining clubmoss).